The sequence spans 352 residues: MTIAVGRAPAARGWFDILDDWLKRDRFVFVGWSGLLLFPTAYLALGGWLTGTTFVTSWYTHGIASSYLEGCNFLTAAVSTPADAMGHSLLLLWGPEAQGDFVRWCQLGGLWAFVALHGAFALIGFMLRQFEIARLVGIRPYNAIAFSGPIAVFVSVFLIYPLGQSSWFFAPSFGVAAIFRFLLFLQGFHNWTLNPFHMMGVAGILGGALLCAIHGATVENTLFEDGEQANTFKAFEPTQEEETYSMVTANRFWSQIFGIAFSNKRWLHFFMLFVPVMGLWTSSIGIIGLALNLRAYDFVSQEIRAAEDPEFETFYTKNILLNEGLRAWMAPADQPHENFVFPEEVLPRGNAL.

Residues 40–60 (TAYLALGGWLTGTTFVTSWYT) form a helical membrane-spanning segment. His-117 provides a ligand contact to chlorophyll a. A helical membrane pass occupies residues 124–140 (GFMLRQFEIARLVGIRP). Pheophytin a is bound by residues Gln-129 and Asn-142. The chain crosses the membrane as a helical span at residues 152–165 (VFVSVFLIYPLGQS). His-197 lines the chlorophyll a pocket. Residues 207-227 (GALLCAIHGATVENTLFEDGE) form a helical membrane-spanning segment. Residues His-214 and Phe-261 each coordinate a plastoquinone. His-214 contributes to the Fe cation binding site. Residue His-268 participates in Fe cation binding. A helical membrane pass occupies residues 278 to 294 (GLWTSSIGIIGLALNLR).

It belongs to the reaction center PufL/M/PsbA/D family. As to quaternary structure, PSII is composed of 1 copy each of membrane proteins PsbA, PsbB, PsbC, PsbD, PsbE, PsbF, PsbH, PsbI, PsbJ, PsbK, PsbL, PsbM, PsbT, PsbX, PsbY, PsbZ, Psb30/Ycf12, at least 3 peripheral proteins of the oxygen-evolving complex and a large number of cofactors. It forms dimeric complexes. The cofactor is The D1/D2 heterodimer binds P680, chlorophylls that are the primary electron donor of PSII, and subsequent electron acceptors. It shares a non-heme iron and each subunit binds pheophytin, quinone, additional chlorophylls, carotenoids and lipids. There is also a Cl(-1) ion associated with D1 and D2, which is required for oxygen evolution. The PSII complex binds additional chlorophylls, carotenoids and specific lipids..

The protein resides in the plastid. Its subcellular location is the organellar chromatophore thylakoid membrane. It catalyses the reaction 2 a plastoquinone + 4 hnu + 2 H2O = 2 a plastoquinol + O2. Its function is as follows. Photosystem II (PSII) is a light-driven water:plastoquinone oxidoreductase that uses light energy to abstract electrons from H(2)O, generating O(2) and a proton gradient subsequently used for ATP formation. It consists of a core antenna complex that captures photons, and an electron transfer chain that converts photonic excitation into a charge separation. The D1/D2 (PsbA/PsbD) reaction center heterodimer binds P680, the primary electron donor of PSII as well as several subsequent electron acceptors. D2 is needed for assembly of a stable PSII complex. In Paulinella chromatophora, this protein is Photosystem II D2 protein.